Here is a 173-residue protein sequence, read N- to C-terminus: Flavodoxin (173 aa).

The 167-residue stretch at 2 to 168 (IGIFFSTSTG…RVAGWVEAVV (167 aa)) folds into the Flavodoxin-like domain.

This sequence belongs to the flavodoxin family. Requires FMN as cofactor.

In terms of biological role, low-potential electron donor to a number of redox enzymes. This chain is Flavodoxin, found in Chondrus crispus (Carrageen Irish moss).